The sequence spans 191 residues: Fe/S biogenesis protein NfuA (191 aa).

Cysteine 149 and cysteine 152 together coordinate [4Fe-4S] cluster.

This sequence belongs to the NfuA family. In terms of assembly, homodimer. [4Fe-4S] cluster is required as a cofactor.

Its function is as follows. Involved in iron-sulfur cluster biogenesis. Binds a 4Fe-4S cluster, can transfer this cluster to apoproteins, and thereby intervenes in the maturation of Fe/S proteins. Could also act as a scaffold/chaperone for damaged Fe/S proteins. This chain is Fe/S biogenesis protein NfuA, found in Escherichia coli O139:H28 (strain E24377A / ETEC).